Here is a 419-residue protein sequence, read N- to C-terminus: Histidine--tRNA ligase (419 aa).

This sequence belongs to the class-II aminoacyl-tRNA synthetase family. As to quaternary structure, homodimer.

It localises to the cytoplasm. The enzyme catalyses tRNA(His) + L-histidine + ATP = L-histidyl-tRNA(His) + AMP + diphosphate + H(+). The chain is Histidine--tRNA ligase from Synechococcus sp. (strain JA-3-3Ab) (Cyanobacteria bacterium Yellowstone A-Prime).